Reading from the N-terminus, the 208-residue chain is Histone H1t (208 aa).

A compositionally biased stretch (polar residues) spans 1-12; the sequence is MSETAPAASSTL. The segment at 1 to 39 is disordered; that stretch reads MSETAPAASSTLVPAPVEKPATKRRGKKPGMATARKPRG. Ser9 carries the post-translational modification Phosphoserine. One can recognise an H15 domain in the interval 38–111; that stretch reads RGFSVSKLIP…GASGSFKLSK (74 aa). At Arg56 the chain carries Citrulline. The tract at residues 93–208 is disordered; sequence GVLVQTKGTG…TDLRKAAGRK (116 aa). Over residues 121-134 the composition is skewed to basic residues; sequence KGKKSASAKAKKLG. Ser141 carries the post-translational modification Phosphoserine. Positions 143 to 154 are enriched in basic residues; it reads KSSKTKVVKKPK. The residue at position 156 (Thr156) is a Phosphothreonine. Phosphoserine is present on residues Ser163, Ser178, and Ser187. The span at 199-208 shows a compositional bias: basic and acidic residues; the sequence is TDLRKAAGRK.

Belongs to the histone H1/H5 family. Phosphorylated in early spermatids. In terms of processing, citrullination at Arg-56 (H1R54ci) by PADI4 takes place within the DNA-binding site of H1 and results in its displacement from chromatin and global chromatin decondensation, thereby promoting pluripotency and stem cell maintenance. As to expression, testis-specific. Expressed in pachytene spermatocytes during meiotic prophase I.

Its subcellular location is the nucleus. The protein resides in the chromosome. Its function is as follows. Testis-specific histone H1 that forms less compacted chromatin compared to other H1 histone subtypes. Formation of more relaxed chromatin may be required to promote chromatin architecture required for proper chromosome regulation during meiosis, such as homologous recombination. Histones H1 act as linkers that bind to nucleosomes and compact polynucleosomes into a higher-order chromatin configuration. This Rattus norvegicus (Rat) protein is Histone H1t.